Here is a 980-residue protein sequence, read N- to C-terminus: Probable outer membrane protein PmpH (980 aa).

A signal peptide spans 1-24 (MPFSLRSTSFCFLACLCSYSYGLA). Residues 661–980 (GELVPNSLWV…FVSLGLNRIF (320 aa)) enclose the Autotransporter domain.

Belongs to the PMP outer membrane protein family.

The protein localises to the secreted. It is found in the cell wall. It localises to the cell outer membrane. In Chlamydia muridarum (strain MoPn / Nigg), this protein is Probable outer membrane protein PmpH (pmpH).